The following is a 65-amino-acid chain: Large ribosomal subunit protein uL30 (65 aa).

Belongs to the universal ribosomal protein uL30 family. In terms of assembly, part of the 50S ribosomal subunit.

This chain is Large ribosomal subunit protein uL30, found in Aster yellows witches'-broom phytoplasma (strain AYWB).